A 189-amino-acid polypeptide reads, in one-letter code: MDQLQQSLLEAPIIEKDGYHYFVHPISDGVPMLEPNLLREIVIKIIRKAQLENVDKIVTPAAMGIHISTAVSLMTDIPLVVIRKREYGLDGETPLFQQTGYSENQMYINDVDEGDSVLVLDDVLSTGGTLSAICSALEDIGADIVDVVAVIKKVGGENELESSPYSAKTLINVDVEDGEVVIIDSNGDN.

This sequence belongs to the purine/pyrimidine phosphoribosyltransferase family. Archaeal HPRT subfamily.

May catalyze a purine salvage reaction, the substrate is unknown. This Natronomonas pharaonis (strain ATCC 35678 / DSM 2160 / CIP 103997 / JCM 8858 / NBRC 14720 / NCIMB 2260 / Gabara) (Halobacterium pharaonis) protein is HGPRTase-like protein.